We begin with the raw amino-acid sequence, 432 residues long: Luc7-like protein 3 (432 aa).

Met1 is subject to N-acetylmethionine. Residues Ser3, Ser110, and Ser115 each carry the phosphoserine modification. Positions 124 to 181 form a coiled coil; that stretch reads KNEEKIQVLTDKIDVLLQQIEELGSEGKVEEAQGMMKLVEQLKEERELLRSTTSTIES. Lys231 carries the N6-acetyllysine modification. Positions 234 to 287 are enriched in basic and acidic residues; the sequence is LRKRTEEPDRDERLKKEKQEREEREKEREREREERERKRRREEEEREKERARDR. Residues 234–432 form a disordered region; the sequence is LRKRTEEPDR…IKSEGDTQSN (199 aa). Basic residues predominate over residues 288–301; sequence ERRKRSRSRSRHSS. Positions 302–311 are enriched in basic and acidic residues; the sequence is RTSDRRCSRS. Positions 312-367 are enriched in basic residues; that stretch reads RDHKRSRSRDRRRSRSRDRRRSRSHDRSERKHRSRSRDRRRSKSRDRKSYKHRSKS. Over residues 368-414 the composition is skewed to basic and acidic residues; it reads RDREQDRKSKEKEKKGSDDKKSSVKSSSREKQSEDTNPESKESDTKN. Phosphoserine is present on Ser420. Positions 421–432 are enriched in basic and acidic residues; the sequence is EDIKSEGDTQSN. A Glycyl lysine isopeptide (Lys-Gly) (interchain with G-Cter in SUMO1); alternate cross-link involves residue Lys424. A Glycyl lysine isopeptide (Lys-Gly) (interchain with G-Cter in SUMO2); alternate cross-link involves residue Lys424. Residues Ser425 and Ser431 each carry the phosphoserine modification.

This sequence belongs to the Luc7 family. As to quaternary structure, may interact with SFRS1 and form homodimers. Interacts with JMJD6. Interacts with RBM25. Interacts with RSRC1 (via Arg/Ser-rich domain). Interacts with RRP1B.

Its subcellular location is the nucleus speckle. In terms of biological role, binds cAMP regulatory element DNA sequence. May play a role in RNA splicing. The chain is Luc7-like protein 3 (Luc7l3) from Mus musculus (Mouse).